Consider the following 524-residue polypeptide: Leucine-rich repeat-containing protein 1 (524 aa).

17 LRR repeats span residues 11–34, 35–58, 60–81, 83–105, 107–126, 127–149, 150–172, 173–196, 198–218, 219–242, 244–264, 265–288, 290–310, 311–334, 336–356, 357–380, and 382–405; these read NRHVEAIDKRHCSLVYVPEEIYRY, ARSLEELLLDANQLRELPEQFFQL, KLRKLGLSDNEIQRLPPEIANF, QLVELDVSRNDIPEIPESIAFCK, LQVADFSGNPLTRLPESFPE, LQNLTCLSVNDISLQSLPENIGN, LYNLASLELRENLLTYLPDSLTQ, LRRLEELDLGNNEIYNLPESIGAL, HLKDLWLDGNQLSELPQEIGN, LKNLLCLDVSENRLERLPEEISGL, SLTYLVISQNLLETIPEGIGK, LKKLSILKLDQNRLTQLPEAIGDC, NLTELVLTENRLLTLPKSIGK, LKKLSNLNADRNKLVSLPKEIGGC, SLTMFCIRDNRLTRLPAEVSQ, AVELHVLDVAGNRLHHLPLSLTTL, and LKALWLSDNQSQPLLTFQTDIDRA. The stretch at 456 to 512 forms a coiled coil; it reads SAIRFLEDEKDEDENETRTLQRRATPHPGELKNMKKTVENLRNDMNAAKGLDSNKNE. The disordered stretch occupies residues 464–485; the sequence is EKDEDENETRTLQRRATPHPGE. The residue at position 480 (Thr480) is a Phosphothreonine.

In terms of assembly, interacts with DLG1. May form a complex with DLG1 and ERBIN, where interaction between LRRC1 and ERBIN is indirect.

Its subcellular location is the cytoplasm. The protein localises to the membrane. This is Leucine-rich repeat-containing protein 1 (Lrrc1) from Mus musculus (Mouse).